A 229-amino-acid chain; its full sequence is Large ribosomal subunit protein uL1 (229 aa).

It belongs to the universal ribosomal protein uL1 family. Part of the 50S ribosomal subunit.

Binds directly to 23S rRNA. The L1 stalk is quite mobile in the ribosome, and is involved in E site tRNA release. Functionally, protein L1 is also a translational repressor protein, it controls the translation of the L11 operon by binding to its mRNA. This chain is Large ribosomal subunit protein uL1, found in Haemophilus ducreyi (strain 35000HP / ATCC 700724).